The primary structure comprises 247 residues: 3,4-dihydroxy-2-butanone 4-phosphate synthase (247 aa).

D-ribulose 5-phosphate-binding positions include 38–39 (RE), Asp-43, 179–183 (RMGQT), and Glu-203. Glu-39 contributes to the Mg(2+) binding site.

It belongs to the DHBP synthase family. As to quaternary structure, homodimer. Mg(2+) serves as cofactor. It depends on Mn(2+) as a cofactor.

It catalyses the reaction D-ribulose 5-phosphate = (2S)-2-hydroxy-3-oxobutyl phosphate + formate + H(+). The protein operates within cofactor biosynthesis; riboflavin biosynthesis; 2-hydroxy-3-oxobutyl phosphate from D-ribulose 5-phosphate: step 1/1. Catalyzes the conversion of D-ribulose 5-phosphate to formate and 3,4-dihydroxy-2-butanone 4-phosphate. The sequence is that of 3,4-dihydroxy-2-butanone 4-phosphate synthase from Methanosarcina acetivorans (strain ATCC 35395 / DSM 2834 / JCM 12185 / C2A).